A 410-amino-acid chain; its full sequence is LL-diaminopimelate aminotransferase (410 aa).

Substrate-binding residues include Y15 and G42. Residues Y72, 108–109 (TK), Y132, N186, Y217, and 245–247 (SFS) each bind pyridoxal 5'-phosphate. K109, Y132, and N186 together coordinate substrate. K248 carries the post-translational modification N6-(pyridoxal phosphate)lysine. The pyridoxal 5'-phosphate site is built by R256 and N291. The substrate site is built by N291 and R387.

This sequence belongs to the class-I pyridoxal-phosphate-dependent aminotransferase family. LL-diaminopimelate aminotransferase subfamily. In terms of assembly, homodimer. Pyridoxal 5'-phosphate serves as cofactor.

The catalysed reaction is (2S,6S)-2,6-diaminopimelate + 2-oxoglutarate = (S)-2,3,4,5-tetrahydrodipicolinate + L-glutamate + H2O + H(+). It functions in the pathway amino-acid biosynthesis; L-lysine biosynthesis via DAP pathway; LL-2,6-diaminopimelate from (S)-tetrahydrodipicolinate (aminotransferase route): step 1/1. Functionally, involved in the synthesis of meso-diaminopimelate (m-DAP or DL-DAP), required for both lysine and peptidoglycan biosynthesis. Catalyzes the direct conversion of tetrahydrodipicolinate to LL-diaminopimelate. The sequence is that of LL-diaminopimelate aminotransferase from Lawsonia intracellularis (strain PHE/MN1-00).